Reading from the N-terminus, the 144-residue chain is ATP synthase epsilon chain (144 aa).

It belongs to the ATPase epsilon chain family. As to quaternary structure, F-type ATPases have 2 components, CF(1) - the catalytic core - and CF(0) - the membrane proton channel. CF(1) has five subunits: alpha(3), beta(3), gamma(1), delta(1), epsilon(1). CF(0) has three main subunits: a, b and c.

Its subcellular location is the cell inner membrane. Its function is as follows. Produces ATP from ADP in the presence of a proton gradient across the membrane. The chain is ATP synthase epsilon chain from Hydrogenovibrio crunogenus (strain DSM 25203 / XCL-2) (Thiomicrospira crunogena).